The primary structure comprises 241 residues: Anthocyanidin 3-O-glucosyltransferase 4 (241 aa).

Glutamine 104, histidine 119, tryptophan 122, asparagine 123, serine 124, and glutamate 127 together coordinate UDP-alpha-D-glucose. Alanine 142 is an an anthocyanidin binding site. UDP-alpha-D-glucose contacts are provided by glutamate 143 and glutamine 144.

Belongs to the UDP-glycosyltransferase family. In terms of tissue distribution, faintly expressed in cotyledons, roots and leaves.

The enzyme catalyses an anthocyanidin + UDP-alpha-D-glucose + H(+) = an anthocyanidin 3-O-beta-D-glucoside + UDP. It participates in pigment biosynthesis; anthocyanin biosynthesis. Its function is as follows. In the presence of other necessary color factors, this glycosylation reaction allows the accumulation of anthocyanin pigments. This is Anthocyanidin 3-O-glucosyltransferase 4 (GT4) from Manihot esculenta (Cassava).